The sequence spans 673 residues: DNA ligase (673 aa).

NAD(+) contacts are provided by residues 33–37, 83–84, and E117; these read DHQYD and SL. The N6-AMP-lysine intermediate role is filled by K119. NAD(+)-binding residues include R140, E175, K282, and K306. Residues C400, C403, C418, and C424 each contribute to the Zn(2+) site. Residues 592–673 enclose the BRCT domain; sequence RGSSAISGKT…WVKMVEDARS (82 aa).

It belongs to the NAD-dependent DNA ligase family. LigA subfamily. Mg(2+) serves as cofactor. Mn(2+) is required as a cofactor.

The enzyme catalyses NAD(+) + (deoxyribonucleotide)n-3'-hydroxyl + 5'-phospho-(deoxyribonucleotide)m = (deoxyribonucleotide)n+m + AMP + beta-nicotinamide D-nucleotide.. DNA ligase that catalyzes the formation of phosphodiester linkages between 5'-phosphoryl and 3'-hydroxyl groups in double-stranded DNA using NAD as a coenzyme and as the energy source for the reaction. It is essential for DNA replication and repair of damaged DNA. This chain is DNA ligase, found in Anaplasma marginale (strain St. Maries).